A 73-amino-acid polypeptide reads, in one-letter code: Sec-independent protein translocase protein TatA (73 aa).

A helical membrane pass occupies residues 1–21 (MFGLGAPELILILILALIIFG). Residues 52–73 (EAAKIDDGNNNSDKEKATRQAS) are disordered.

Belongs to the TatA/E family. As to quaternary structure, forms a complex with TatC.

It is found in the cell membrane. Functionally, part of the twin-arginine translocation (Tat) system that transports large folded proteins containing a characteristic twin-arginine motif in their signal peptide across membranes. TatA could form the protein-conducting channel of the Tat system. In Moorella thermoacetica (strain ATCC 39073 / JCM 9320), this protein is Sec-independent protein translocase protein TatA.